A 303-amino-acid polypeptide reads, in one-letter code: Aspartate carbamoyltransferase catalytic subunit (303 aa).

The carbamoyl phosphate site is built by Arg-51 and Thr-52. Lys-80 contacts L-aspartate. Carbamoyl phosphate is bound by residues Arg-101, His-129, and Gln-132. L-aspartate contacts are provided by Arg-162 and Arg-221. Carbamoyl phosphate contacts are provided by Leu-260 and Pro-261.

This sequence belongs to the aspartate/ornithine carbamoyltransferase superfamily. ATCase family. Heterooligomer of catalytic and regulatory chains.

It carries out the reaction carbamoyl phosphate + L-aspartate = N-carbamoyl-L-aspartate + phosphate + H(+). Its pathway is pyrimidine metabolism; UMP biosynthesis via de novo pathway; (S)-dihydroorotate from bicarbonate: step 2/3. Functionally, catalyzes the condensation of carbamoyl phosphate and aspartate to form carbamoyl aspartate and inorganic phosphate, the committed step in the de novo pyrimidine nucleotide biosynthesis pathway. This Saccharolobus islandicus (strain M.16.4 / Kamchatka #3) (Sulfolobus islandicus) protein is Aspartate carbamoyltransferase catalytic subunit.